Reading from the N-terminus, the 293-residue chain is Diaminopimelate epimerase (293 aa).

Substrate contacts are provided by Asn15, Gln47, and Asn67. Residue Cys76 is the Proton donor of the active site. Substrate is bound by residues 77 to 78 (GN), Asn163, Asn197, and 215 to 216 (ER). Cys224 acts as the Proton acceptor in catalysis. 225–226 (GS) contributes to the substrate binding site.

The protein belongs to the diaminopimelate epimerase family. In terms of assembly, homodimer.

The protein resides in the cytoplasm. The catalysed reaction is (2S,6S)-2,6-diaminopimelate = meso-2,6-diaminopimelate. The protein operates within amino-acid biosynthesis; L-lysine biosynthesis via DAP pathway; DL-2,6-diaminopimelate from LL-2,6-diaminopimelate: step 1/1. Its function is as follows. Catalyzes the stereoinversion of LL-2,6-diaminopimelate (L,L-DAP) to meso-diaminopimelate (meso-DAP), a precursor of L-lysine and an essential component of the bacterial peptidoglycan. This is Diaminopimelate epimerase from Chelativorans sp. (strain BNC1).